A 428-amino-acid chain; its full sequence is Adenylosuccinate synthetase (428 aa).

Residues 12–18 (GDEGKGK) and 40–42 (GHT) contribute to the GTP site. The active-site Proton acceptor is Asp-13. Positions 13 and 40 each coordinate Mg(2+). IMP-binding positions include 13–16 (DEGK), 38–41 (NAGH), Thr-130, Arg-144, Gln-225, Thr-240, and Arg-304. The active-site Proton donor is the His-41. Position 300–306 (300–306 (TTTGRPR)) interacts with substrate. GTP contacts are provided by residues Arg-306, 332–334 (KLD), and 414–416 (SVG).

It belongs to the adenylosuccinate synthetase family. As to quaternary structure, homodimer. Mg(2+) is required as a cofactor.

The protein localises to the cytoplasm. The catalysed reaction is IMP + L-aspartate + GTP = N(6)-(1,2-dicarboxyethyl)-AMP + GDP + phosphate + 2 H(+). The protein operates within purine metabolism; AMP biosynthesis via de novo pathway; AMP from IMP: step 1/2. Functionally, plays an important role in the de novo pathway of purine nucleotide biosynthesis. Catalyzes the first committed step in the biosynthesis of AMP from IMP. This is Adenylosuccinate synthetase from Caldanaerobacter subterraneus subsp. tengcongensis (strain DSM 15242 / JCM 11007 / NBRC 100824 / MB4) (Thermoanaerobacter tengcongensis).